The chain runs to 96 residues: MKFLLLVLAALRFLTQVIPASGGGSKCVSDTQGYCRTYCHQGETALFMCNASRKCCASYSFLPKPDLPQLIGNHWQSRRRNTQRKDKKQQTTVTSS.

An N-terminal signal peptide occupies residues 1-22 (MKFLLLVLAALRFLTQVIPASG). 3 disulfides stabilise this stretch: C27/C55, C35/C49, and C39/C56. Residues 74–96 (HWQSRRRNTQRKDKKQQTTVTSS) form a disordered region. Basic residues predominate over residues 76-87 (QSRRRNTQRKDK).

It belongs to the beta-defensin family.

The protein resides in the secreted. Has antibacterial activity. The sequence is that of Beta-defensin 132 (DEFB132) from Hylobates lar (Lar gibbon).